The following is a 187-amino-acid chain: Peptidoglycan-recognition protein 3 (187 aa).

The first 19 residues, 1-19 (MKAFLVALLISIELALVFA), serve as a signal peptide directing secretion. Cystine bridges form between Cys-21/Cys-144 and Cys-58/Cys-64. The N-acetylmuramoyl-L-alanine amidase domain occupies 43 to 170 (KPLKYVIINH…RTIRQTNSPG (128 aa)). A glycan (N-linked (GlcNAc...) asparagine) is linked at Asn-51.

This sequence belongs to the N-acetylmuramoyl-L-alanine amidase 2 family.

The protein resides in the secreted. Peptidoglycan-recognition protein probably involved in innate immunity by binding to peptidoglycans (PGN) of bacteria and activating the prophenoloxidase (proPO) cascade immune response. Binds to 1,3-beta-D-glucan and PGN. The protein is Peptidoglycan-recognition protein 3 (PGRP-3) of Holotrichia diomphalia (Korean black chafer).